A 129-amino-acid chain; its full sequence is Type II secretion system protein I (129 aa).

Residues 1–6 constitute a propeptide, leader sequence; the sequence is MKRARG. An N-methylphenylalanine modification is found at phenylalanine 7. The chain crosses the membrane as a helical span at residues 7 to 27; that stretch reads FTLLEVLVALAIFAMVAASVL.

This sequence belongs to the GSP I family. Type II secretion is composed of four main components: the outer membrane complex, the inner membrane complex, the cytoplasmic secretion ATPase and the periplasm-spanning pseudopilus. Forms the tip of the type II pseudopilus by interacting with XcpU, XcpW and XcpX. Interacts with core component XcpT. In terms of processing, cleaved by prepilin peptidase. Methylated by prepilin peptidase at the amino group of the N-terminal phenylalanine once the leader sequence is cleaved by prepilin peptidase.

It is found in the cell inner membrane. Its function is as follows. Component of the type II secretion system required for the energy-dependent secretion of extracellular factors such as proteases and toxins from the periplasm. Part of the pseudopilus tip complex that is critical for the recognition and binding of secretion substrates. Type II pseudopilus confers increased bacterial adhesive capabilities. The protein is Type II secretion system protein I (xcpV) of Pseudomonas aeruginosa (strain ATCC 15692 / DSM 22644 / CIP 104116 / JCM 14847 / LMG 12228 / 1C / PRS 101 / PAO1).